Here is a 232-residue protein sequence, read N- to C-terminus: 5'-methylthioadenosine/S-adenosylhomocysteine nucleosidase (232 aa).

Glu12 (proton acceptor) is an active-site residue. Residues Gly78, Ile152, and 173 to 174 contribute to the substrate site; that span reads ME. Asp197 functions as the Proton donor in the catalytic mechanism.

It belongs to the PNP/UDP phosphorylase family. MtnN subfamily. In terms of assembly, homodimer.

The catalysed reaction is S-adenosyl-L-homocysteine + H2O = S-(5-deoxy-D-ribos-5-yl)-L-homocysteine + adenine. It carries out the reaction S-methyl-5'-thioadenosine + H2O = 5-(methylsulfanyl)-D-ribose + adenine. It catalyses the reaction 5'-deoxyadenosine + H2O = 5-deoxy-D-ribose + adenine. It participates in amino-acid biosynthesis; L-methionine biosynthesis via salvage pathway; S-methyl-5-thio-alpha-D-ribose 1-phosphate from S-methyl-5'-thioadenosine (hydrolase route): step 1/2. In terms of biological role, catalyzes the irreversible cleavage of the glycosidic bond in both 5'-methylthioadenosine (MTA) and S-adenosylhomocysteine (SAH/AdoHcy) to adenine and the corresponding thioribose, 5'-methylthioribose and S-ribosylhomocysteine, respectively. Also cleaves 5'-deoxyadenosine, a toxic by-product of radical S-adenosylmethionine (SAM) enzymes, into 5-deoxyribose and adenine. Thus, is required for in vivo function of the radical SAM enzymes biotin synthase and lipoic acid synthase, that are inhibited by 5'-deoxyadenosine accumulation. The polypeptide is 5'-methylthioadenosine/S-adenosylhomocysteine nucleosidase (Erwinia tasmaniensis (strain DSM 17950 / CFBP 7177 / CIP 109463 / NCPPB 4357 / Et1/99)).